We begin with the raw amino-acid sequence, 521 residues long: Apolipoprotein N-acyltransferase (521 aa).

The next 6 membrane-spanning stretches (helical) occupy residues V27–A47, L64–V84, I93–V113, I125–L145, I167–L187, and Y202–F222. The CN hydrolase domain occupies I239–L483. E281 functions as the Proton acceptor in the catalytic mechanism. K344 is a catalytic residue. C394 acts as the Nucleophile in catalysis. The helical transmembrane segment at Y493 to F513 threads the bilayer.

Belongs to the CN hydrolase family. Apolipoprotein N-acyltransferase subfamily.

The protein resides in the cell inner membrane. The catalysed reaction is N-terminal S-1,2-diacyl-sn-glyceryl-L-cysteinyl-[lipoprotein] + a glycerophospholipid = N-acyl-S-1,2-diacyl-sn-glyceryl-L-cysteinyl-[lipoprotein] + a 2-acyl-sn-glycero-3-phospholipid + H(+). It functions in the pathway protein modification; lipoprotein biosynthesis (N-acyl transfer). Its function is as follows. Catalyzes the phospholipid dependent N-acylation of the N-terminal cysteine of apolipoprotein, the last step in lipoprotein maturation. This chain is Apolipoprotein N-acyltransferase, found in Geobacter metallireducens (strain ATCC 53774 / DSM 7210 / GS-15).